The sequence spans 460 residues: Chromosomal replication initiator protein DnaA (460 aa).

A domain I, interacts with DnaA modulators region spans residues 1–84; sequence MAVSLWQQCI…RFDIGSRPSA (84 aa). Residues 84–123 are domain II; the sequence is AKKPEPAPVAAVRVPNPQTKASVGTSFNTTEPVVNANHRS. Positions 124–340 are domain III, AAA+ region; sequence NINPTYQFDN…GALNRVIANA (217 aa). ATP-binding residues include Gly168, Gly170, Lys171, and Thr172. The segment at 341 to 460 is domain IV, binds dsDNA; sequence NFTGRPITID…YANLIRTLSS (120 aa).

It belongs to the DnaA family. Oligomerizes as a right-handed, spiral filament on DNA at oriC.

It is found in the cytoplasm. Plays an essential role in the initiation and regulation of chromosomal replication. ATP-DnaA binds to the origin of replication (oriC) to initiate formation of the DNA replication initiation complex once per cell cycle. Binds the DnaA box (a 9 base pair repeat at the origin) and separates the double-stranded (ds)DNA. Forms a right-handed helical filament on oriC DNA; dsDNA binds to the exterior of the filament while single-stranded (ss)DNA is stabiized in the filament's interior. The ATP-DnaA-oriC complex binds and stabilizes one strand of the AT-rich DNA unwinding element (DUE), permitting loading of DNA polymerase. After initiation quickly degrades to an ADP-DnaA complex that is not apt for DNA replication. Binds acidic phospholipids. This Shewanella sp. (strain MR-7) protein is Chromosomal replication initiator protein DnaA.